The chain runs to 280 residues: Meiotic spindle formation protein 2 (280 aa).

Positions 1-104 are disordered; the sequence is MSGLDDRKKL…LPKSSPESSV (104 aa). Basic and acidic residues predominate over residues 72-92; sequence LHSESKKELSRNPVSRGEEHS. Low complexity predominate over residues 93–104; that stretch reads SSLPKSSPESSV.

In terms of assembly, interacts with mei-1.

It localises to the cytoplasm. Its subcellular location is the cytoskeleton. The protein localises to the spindle pole. Functionally, forms a heterodimeric complex in conjunction with mei-1 which severs microtubules in vitro in an ATP-dependent manner. This activity may promote rapid reorganization of cellular microtubule arrays. May act to target mei-1 within the cell. Required specifically for meiotic spindle formation in the female germline. In Caenorhabditis elegans, this protein is Meiotic spindle formation protein 2 (mei-2).